The chain runs to 252 residues: Adenosine 5'-phosphosulfate reductase (252 aa).

[4Fe-4S] cluster-binding residues include Cys-125, Cys-126, Cys-208, and Cys-211. The segment at 219–252 (DGYSREGRWSDRDKTECGLHTSPEDEDGAHAAES) is disordered. The span at 221-235 (YSREGRWSDRDKTEC) shows a compositional bias: basic and acidic residues. Residue Cys-235 is the Nucleophile; cysteine thiosulfonate intermediate of the active site.

Belongs to the PAPS reductase family. CysH subfamily. [4Fe-4S] cluster is required as a cofactor.

Its subcellular location is the cytoplasm. The enzyme catalyses [thioredoxin]-disulfide + sulfite + AMP + 2 H(+) = adenosine 5'-phosphosulfate + [thioredoxin]-dithiol. It participates in sulfur metabolism; hydrogen sulfide biosynthesis; sulfite from sulfate. Catalyzes the formation of sulfite from adenosine 5'-phosphosulfate (APS) using thioredoxin as an electron donor. The sequence is that of Adenosine 5'-phosphosulfate reductase from Salinibacter ruber (strain DSM 13855 / M31).